The chain runs to 138 residues: Basic phospholipase A2 chain HDP-1P (138 aa).

The N-terminal stretch at 1–16 (MRILWIVAVCLIGVEG) is a signal peptide. 7 cysteine pairs are disulfide-bonded: cysteine 42/cysteine 131, cysteine 44/cysteine 60, cysteine 59/cysteine 111, cysteine 65/cysteine 138, cysteine 66/cysteine 104, cysteine 73/cysteine 97, and cysteine 91/cysteine 102. Ca(2+) contacts are provided by tyrosine 43, glycine 45, and glycine 47. Histidine 63 is an active-site residue. A Ca(2+)-binding site is contributed by aspartate 64. Aspartate 105 is a catalytic residue.

As to quaternary structure, heterodimer; non-covalently linked. The toxic basic protein has phospholipase A2 activity (chain HDP-1P) and the non-toxic acidic protein functions as its inhibitor (chain HPD-1I (AC A4VBF0)). Ca(2+) is required as a cofactor. As to expression, expressed by the venom gland.

Its subcellular location is the secreted. It carries out the reaction a 1,2-diacyl-sn-glycero-3-phosphocholine + H2O = a 1-acyl-sn-glycero-3-phosphocholine + a fatty acid + H(+). With respect to regulation, enzymatic activity and neurotoxicity are inhibited by Triton X-100, which has been determined to be located in the center of the hydrophobic channel of the enzyme. In terms of biological role, heterodimer: shows the same activities as the monomer, but with a lower potency. Its function is as follows. Monomer: snake venom phospholipase A2 (PLA2) that shows presynaptic neurotoxicity, anticoagulant activity and that weakly inhibits ADP-induced platelet aggregation. Inhibits exocytosis in pancreatic beta cells, confirming it can act presynaptically in inhibiting the exocytosis of neurotransmitters in neurons. PLA2 catalyzes the calcium-dependent hydrolysis of the 2-acyl groups in 3-sn-phosphoglycerides. In Vipera nikolskii (Nikolsky's adder), this protein is Basic phospholipase A2 chain HDP-1P.